The chain runs to 143 residues: Putative transmembrane protein ORF32 (143 aa).

The next 2 membrane-spanning stretches (helical) occupy residues 20-42 and 52-74; these read GISG…SFTL and WPLI…EGGV.

It localises to the host membrane. This is Putative transmembrane protein ORF32 from Haloarcula hispanica (His1V).